Here is a 264-residue protein sequence, read N- to C-terminus: MASSSAPRFRVYSKYLFLTYPECTLEPQYALDSLRTLLNKYEPLYIAAVRELHEDGSPHLHVLVQNKLRASITNPNALNLRMDTSPFSIFHPNIQAAKDCNQVRDYITKEVDSDVNTAEWGTFVAVSTPGRKDRDADMKQIIESSSSREEFLSMVCNRFPFEWSIRLKDFEYTARHLFPDPVATYTPEFPTESLICHETIESWKNEHLYSVSLESYILCTSTPADQAQSDLEWMDDYSRSHRGGISPSTSAGQPEQERLPGQGL.

In terms of domain architecture, CRESS-DNA virus Rep endonuclease spans 10–123 (RVYSKYLFLT…DVNTAEWGTF (114 aa)). Positions 17 to 20 (FLTY) match the RCR-1 motif. A divalent metal cation is bound by residues glutamate 51, histidine 59, and histidine 61. An RCR-2 motif is present at residues 59–61 (HLH). Tyrosine 106 acts as the For DNA cleavage activity in catalysis. The RCR-3 signature appears at 106–109 (YITK). A divalent metal cation is bound at residue glutamate 110. An oligomerization region spans residues 173 to 185 (TARHLFPDPVATY). The short motif at 194–198 (LICHE) is the LXCXE motif, interaction with host RBR1 element. A disordered region spans residues 237 to 264 (YSRSHRGGISPSTSAGQPEQERLPGQGL).

This sequence belongs to the geminiviridae Rep protein family. As to quaternary structure, homooligomer. Interacts (via LXCXE domain) with host retinoblastoma-related protein 1 (RBR1), and may thereby deregulate the host cell cycle. Part of the C- and V-complexes which are RepA-Rep-DNA complexes involved in the c-sense and v-sense transcription. It depends on Mg(2+) as a cofactor. Mn(2+) serves as cofactor.

It localises to the host nucleus. It is found in the host cytoplasm. Implicated in enhancement of V-sense gene expression. Acts a an inhibitor of C-sense gene transcription. The chain is Replication-associated protein A from Wheat dwarf virus (isolate Sweden) (WDV).